Reading from the N-terminus, the 110-residue chain is Glycine-rich selenoprotein (110 aa).

Residues Met1–Arg20 are Lumenal-facing. The helical; Signal-anchor for type III membrane protein transmembrane segment at Ile21–Ala41 threads the bilayer. Residues Pro42–Gly110 are Cytoplasmic-facing. Positions Asn51–Gly110 are disordered. A compositionally biased stretch (gly residues) spans Asn56 to Gly85. Sec109 is a non-standard amino acid (selenocysteine).

Its subcellular location is the golgi apparatus membrane. In terms of biological role, plays a role in the life span. May be involved in regulating the redox state of the cell and possesses anticarcinogenic properties. The polypeptide is Glycine-rich selenoprotein (SelG) (Drosophila melanogaster (Fruit fly)).